We begin with the raw amino-acid sequence, 386 residues long: Trichocyst matrix protein T2-A (386 aa).

A signal peptide spans 1–19; sequence MKTVILALALIVLASSTQA. Residues 20-48 constitute a propeptide that is removed on maturation; the sequence is DVIATIKKIDQSPFGRTLFDTIYLELQTG. A coiled-coil region spans residues 51-154; it reads LDRLLSTLTD…AEEHEDFEEK (104 aa). A propeptide spanning residues 184–238 is cleaved from the precursor; it reads KGKATKQTHKFTKEVASMIQKHFTTSAKKTAKFQHRKGYSKLFKAFATIASKVEQ. Residues 293 to 332 adopt a coiled-coil conformation; that stretch reads SALANATSDLASLNDIIAQVEASLDTTEQRIENVSADRHD.

Belongs to the TMP family.

Its subcellular location is the trichocyst. Structural protein that crystallize inside the trichocyst matrix. The sequence is that of Trichocyst matrix protein T2-A (T2A) from Paramecium tetraurelia.